A 488-amino-acid chain; its full sequence is Glutamyl-tRNA(Gln) amidotransferase subunit A (488 aa).

Catalysis depends on charge relay system residues lysine 80 and serine 155. Residue serine 179 is the Acyl-ester intermediate of the active site.

This sequence belongs to the amidase family. GatA subfamily. In terms of assembly, heterotrimer of A, B and C subunits.

The catalysed reaction is L-glutamyl-tRNA(Gln) + L-glutamine + ATP + H2O = L-glutaminyl-tRNA(Gln) + L-glutamate + ADP + phosphate + H(+). Its function is as follows. Allows the formation of correctly charged Gln-tRNA(Gln) through the transamidation of misacylated Glu-tRNA(Gln) in organisms which lack glutaminyl-tRNA synthetase. The reaction takes place in the presence of glutamine and ATP through an activated gamma-phospho-Glu-tRNA(Gln). This chain is Glutamyl-tRNA(Gln) amidotransferase subunit A, found in Chloroflexus aggregans (strain MD-66 / DSM 9485).